The chain runs to 410 residues: Proteasome-activating nucleotidase (410 aa).

Positions 1–70 (MENNSQNVLK…LRGEIERFRT (70 aa)) form a coiled coil. Residues 195–200 (GTGKTL) and His-334 contribute to the ATP site. The tract at residues 408-410 (MFG) is docks into pockets in the proteasome alpha-ring to cause gate opening.

The protein belongs to the AAA ATPase family. Homohexamer. The hexameric complex has a two-ring architecture resembling a top hat that caps the 20S proteasome core at one or both ends. Upon ATP-binding, the C-terminus of PAN interacts with the alpha-rings of the proteasome core by binding to the intersubunit pockets.

It localises to the cytoplasm. In terms of biological role, ATPase which is responsible for recognizing, binding, unfolding and translocation of substrate proteins into the archaeal 20S proteasome core particle. Is essential for opening the gate of the 20S proteasome via an interaction with its C-terminus, thereby allowing substrate entry and access to the site of proteolysis. Thus, the C-termini of the proteasomal ATPase function like a 'key in a lock' to induce gate opening and therefore regulate proteolysis. Unfolding activity requires energy from ATP hydrolysis, whereas ATP binding alone promotes ATPase-20S proteasome association which triggers gate opening, and supports translocation of unfolded substrates. In Methanothermobacter thermautotrophicus (strain ATCC 29096 / DSM 1053 / JCM 10044 / NBRC 100330 / Delta H) (Methanobacterium thermoautotrophicum), this protein is Proteasome-activating nucleotidase.